The sequence spans 122 residues: UPF0102 protein ECH_0093 (122 aa).

Belongs to the UPF0102 family.

The sequence is that of UPF0102 protein ECH_0093 from Ehrlichia chaffeensis (strain ATCC CRL-10679 / Arkansas).